We begin with the raw amino-acid sequence, 2678 residues long: Mediator of RNA polymerase II transcription subunit 13 (2678 aa).

Disordered stretches follow at residues 1–52 (MMGT…GYNS), 140–285 (SKKP…QPIS), 495–524 (NSNN…QQQQ), 553–615 (QQQQ…NNNI), 852–993 (SPSS…QQQQ), 1070–1253 (TSHY…KPFL), 1278–1394 (LPHN…QDES), 1462–1502 (SPFS…NNHH), 1806–1838 (FSGS…SMDD), 2075–2105 (QNQN…QTQT), 2225–2307 (SSSS…QEQK), and 2656–2678 (KLTP…SNNT). Composition is skewed to low complexity over residues 15–48 (SGSN…PTTS), 144–162 (INNS…TDSS), and 169–186 (NSPS…NSNN). Residues 187 to 206 (VTKDSPPNATNKMSTSPKSL) are compositionally biased toward polar residues. Over residues 207–276 (SPTISNNNNN…SPPTVASVTS (70 aa)) the composition is skewed to low complexity. 2 stretches are compositionally biased toward low complexity: residues 553–573 (QQQQ…DNNN) and 587–615 (SSSS…NNNI). Residues 855–872 (SPLTQHPSSPHSPFNNVN) are compositionally biased toward polar residues. Positions 901 to 916 (KKRHGKSQKKGRSSKR) are enriched in basic residues. Over residues 922–950 (SNNNNNNNTTTTSTITATTTTTTPTAATT) the composition is skewed to low complexity. 2 stretches are compositionally biased toward polar residues: residues 966 to 979 (NIQE…LTTV) and 1079 to 1090 (PTQNGSQKNNQR). Low complexity predominate over residues 1109–1150 (TTTTTTTTTTTPTPNPTTTTTQPQTQPQQQSQQQQQPQQTNP). Positions 1151–1195 (ILPTNSNLITNQKPQQYQPPLQDPFQSIDSQQPKSIQSPTLTNQP) are enriched in polar residues. The span at 1201–1211 (PTLTNQPLQQY) shows a compositional bias: low complexity. The segment covering 1281–1306 (NTEQSPSNDDLSNPNHLHHGTPTSAI) has biased composition (polar residues). Residues 1312–1321 (SSSSSGNNMI) show a composition bias toward low complexity. The span at 1322 to 1343 (GSGGIVGSGGGNTNVSGSGGGM) shows a compositional bias: gly residues. Residues 1359-1371 (PHHHHHHHHHHHP) are compositionally biased toward basic residues. A compositionally biased stretch (low complexity) spans 1475–1497 (TTTNNNNNHNNNNNNNHPNNHHQ). A compositionally biased stretch (polar residues) spans 1806–1819 (FSGSSGLNNSNDRN). Residues 2658–2678 (TPNSKQSPSPINSPHLNSNNT) are compositionally biased toward polar residues.

This sequence belongs to the Mediator complex subunit 13 family. Component of the Mediator complex.

It is found in the nucleus. Its function is as follows. Component of the Mediator complex, a coactivator involved in the regulated transcription of nearly all RNA polymerase II-dependent genes. Mediator functions as a bridge to convey information from gene-specific regulatory proteins to the basal RNA polymerase II transcription machinery. Mediator is recruited to promoters by direct interactions with regulatory proteins and serves as a scaffold for the assembly of a functional preinitiation complex with RNA polymerase II and the general transcription factors. Required for the starvation-induced activation of the ACA (adenylyl cyclase) expression pathway at the growth/differentiation transition. The protein is Mediator of RNA polymerase II transcription subunit 13 (amiB) of Dictyostelium discoideum (Social amoeba).